Reading from the N-terminus, the 312-residue chain is MSLSKQPVIVIVGPTAVGKTKTGIELAKKLNGEIISGDSVQVYKQMDIGSAKVTQEEMEGIPHHLLDLVDPDDEMSVARFQTLARTAIDEIAAKGKLPIIVGGTGLYIRAILYDYQFTVQAENKVLREELEQFAQAEGATALHDRLRQLDAKRADEIHPNNIQRVVRAIEVAMSGQTQVSGSEPSLYDSLLFVLHMEDREQLYDRIDQRVDLMIEQGLVAEVDRLVAAGYRDTKAMQAIGYKEIVPVLEGAPLEPAVEQLKRNTRRFAKRQLTWFRHQFDGNWIEMGRLSFEENFKIIYDRTVGFLKAVKSE.

13–20 serves as a coordination point for ATP; it reads GPTAVGKT. A substrate-binding site is contributed by 15 to 20; the sequence is TAVGKT. Interaction with substrate tRNA regions lie at residues 38–41 and 163–167; these read DSVQ and QRVVR.

This sequence belongs to the IPP transferase family. In terms of assembly, monomer. The cofactor is Mg(2+).

The enzyme catalyses adenosine(37) in tRNA + dimethylallyl diphosphate = N(6)-dimethylallyladenosine(37) in tRNA + diphosphate. Its function is as follows. Catalyzes the transfer of a dimethylallyl group onto the adenine at position 37 in tRNAs that read codons beginning with uridine, leading to the formation of N6-(dimethylallyl)adenosine (i(6)A). The chain is tRNA dimethylallyltransferase from Exiguobacterium sibiricum (strain DSM 17290 / CCUG 55495 / CIP 109462 / JCM 13490 / 255-15).